The chain runs to 531 residues: Putative lipase ATG15 (531 aa).

Residues 1–11 (MKPGIKISKRY) are Cytoplasmic-facing. A helical; Signal-anchor for type II membrane protein transmembrane segment spans residues 12–31 (SARNASVITVLLLLIYLIYI). The Lumenal segment spans residues 32-531 (NKETIQTKYQ…WIGICTEYGI (500 aa)). N-linked (GlcNAc...) asparagine glycosylation is found at Asn178 and Asn207. Catalysis depends on Ser340, which acts as the Charge relay system. Positions 482 to 513 (VPKKHKSSSSTASSTSAETSTLTVGPSPPEKT) are disordered. Positions 489–502 (SSSTASSTSAETST) are enriched in low complexity.

It belongs to the AB hydrolase superfamily. Lipase family. Binds to both phosphatidylinositol (PI) and phosphatidylinositol 3,5-bisphosphate (PIP2).

Its subcellular location is the endosome. The protein localises to the multivesicular body membrane. It is found in the prevacuolar compartment membrane. It carries out the reaction a triacylglycerol + H2O = a diacylglycerol + a fatty acid + H(+). Its function is as follows. Lipase which is essential for lysis of subvacuolar cytoplasm to vacuole targeted bodies and intravacuolar autophagic bodies. Involved in the lysis of intravacuolar multivesicular body (MVB) vesicles. The intravacuolar membrane disintegration by ATG15 is critical to life span extension. This chain is Putative lipase ATG15 (ATG15), found in Kluyveromyces lactis (strain ATCC 8585 / CBS 2359 / DSM 70799 / NBRC 1267 / NRRL Y-1140 / WM37) (Yeast).